Consider the following 389-residue polypeptide: Histidinol-phosphate aminotransferase (389 aa).

N6-(pyridoxal phosphate)lysine is present on Lys233.

It belongs to the class-II pyridoxal-phosphate-dependent aminotransferase family. The cofactor is pyridoxal 5'-phosphate.

It catalyses the reaction L-histidinol phosphate + 2-oxoglutarate = 3-(imidazol-4-yl)-2-oxopropyl phosphate + L-glutamate. It participates in amino-acid biosynthesis; L-histidine biosynthesis; L-histidine from 5-phospho-alpha-D-ribose 1-diphosphate: step 7/9. In Candida maltosa (Yeast), this protein is Histidinol-phosphate aminotransferase (HIS5).